The chain runs to 180 residues: Large ribosomal subunit protein uL6 (180 aa).

It belongs to the universal ribosomal protein uL6 family. Part of the 50S ribosomal subunit.

In terms of biological role, this protein binds to the 23S rRNA, and is important in its secondary structure. It is located near the subunit interface in the base of the L7/L12 stalk, and near the tRNA binding site of the peptidyltransferase center. The polypeptide is Large ribosomal subunit protein uL6 (Prosthecochloris aestuarii (strain DSM 271 / SK 413)).